Reading from the N-terminus, the 79-residue chain is Antimicrobial peptide ToAP2 (79 aa).

The N-terminal stretch at 1–23 (MQFKKQLLVIFFAYFLVVNESEA) is a signal peptide. The propeptide occupies 50-79 (SLMKRELKNLYDPYQRSVEMERLLKELPLY).

The protein belongs to the non-disulfide-bridged peptide (NDBP) superfamily. Medium-length antimicrobial peptide (group 3) family. Expressed by the venom gland.

It is found in the secreted. The protein localises to the target cell membrane. In terms of biological role, antimicrobial peptide. Shows antibacterial activity against all M.massiliense bacterial strains tested. Has antifungal activity against Candida spp. and two Cryptococcus neoformans strains with MICs values ranging from 6.25 to 200 uM. Also shows an inhibitory activity on C.albicans biofilms at high concentrations. Exhibits chemotactic activity for monocytes, neutrophils, and eosinophils. Shows low cytotoxic activity and has weak hemolytic activity on human erythrocytes. In vivo, treatment of infected mice with M.massiliense reduces the bacterial load in the liver, lung, and spleen. May act by disrupting the integrity of the bacterial cell membrane. This Tityus obscurus (Amazonian scorpion) protein is Antimicrobial peptide ToAP2.